The chain runs to 563 residues: DEAD-box ATP-dependent RNA helicase 25 (563 aa).

Positions 21 to 57 (KKLTSDEDGSGKLVKDNNKSLKRGREGKSDVDEPLIK) are disordered. Residues 23–56 (LTSDEDGSGKLVKDNNKSLKRGREGKSDVDEPLI) are compositionally biased toward basic and acidic residues. Ser25 is subject to Phosphoserine. The Q motif signature appears at 80 to 108 (TRFDQFPLSPLTLKGIEDAGFKTMTVVQE). Residues 111 to 294 (LPLILQGKDI…HVALKRDHEF (184 aa)) form the Helicase ATP-binding domain. 124–131 (AKTGTGKT) contributes to the ATP binding site. The short motif at 242–245 (DEAD) is the DEAD box element. A Helicase C-terminal domain is found at 328 to 479 (LLKKHITDNV…AVKKVQKGLI (152 aa)).

The protein belongs to the DEAD box helicase family.

The catalysed reaction is ATP + H2O = ADP + phosphate + H(+). The chain is DEAD-box ATP-dependent RNA helicase 25 (RH25) from Arabidopsis thaliana (Mouse-ear cress).